Consider the following 467-residue polypeptide: Inactive pancreatic lipase-related protein 1 (467 aa).

Residues 1–17 (MVSIWTIALFLLGAAKA) form the signal peptide. 2 cysteine pairs are disulfide-bonded: Cys21-Cys27 and Cys109-Cys120. N-linked (GlcNAc...) asparagine glycosylation occurs at Asn157. The Nucleophile role is filled by Ser171. Asp194 (charge relay system) is an active-site residue. Ca(2+) contacts are provided by Glu205, Arg208, Asp210, and Asp213. The cysteines at positions 255 and 279 are disulfide-linked. The Charge relay system role is filled by His281. Cystine bridges form between Cys303/Cys314, Cys317/Cys322, and Cys451/Cys467. The region spanning 356-467 (WRYGVSITLS…EDVLLTLTPC (112 aa)) is the PLAT domain.

The protein belongs to the AB hydrolase superfamily. Lipase family. In terms of tissue distribution, detected in pancreas (at protein level).

It localises to the secreted. In terms of biological role, may function as inhibitor of dietary triglyceride digestion. Lacks detectable lipase activity towards triglycerides, diglycerides, phosphatidylcholine, galactolipids or cholesterol esters (in vitro). The sequence is that of Inactive pancreatic lipase-related protein 1 (PNLIPRP1) from Canis lupus familiaris (Dog).